Here is a 264-residue protein sequence, read N- to C-terminus: Acetylglutamate kinase (264 aa).

Substrate is bound by residues 40–41 (GG), Arg-62, and Asn-158.

Belongs to the acetylglutamate kinase family. ArgB subfamily.

It is found in the cytoplasm. It catalyses the reaction N-acetyl-L-glutamate + ATP = N-acetyl-L-glutamyl 5-phosphate + ADP. Its pathway is amino-acid biosynthesis; L-arginine biosynthesis; N(2)-acetyl-L-ornithine from L-glutamate: step 2/4. Functionally, catalyzes the ATP-dependent phosphorylation of N-acetyl-L-glutamate. The sequence is that of Acetylglutamate kinase from Cytophaga hutchinsonii (strain ATCC 33406 / DSM 1761 / CIP 103989 / NBRC 15051 / NCIMB 9469 / D465).